Consider the following 162-residue polypeptide: Novel acetylcholine receptor chaperone (162 aa).

Residues 1–5 (MASPR) lie on the Cytoplasmic side of the membrane. A helical transmembrane segment spans residues 6 to 26 (TVTIVALSVTLGLFFVFMGTI). The Lumenal segment spans residues 27–61 (KLTPRLSKDAYSEMKRAYKSYVKALPALKKIGISS). A helical membrane pass occupies residues 62-82 (VFLRKAIGSLELACGIVLTLV). Residues 83-88 (PGRPKD) lie on the Cytoplasmic side of the membrane. The helical transmembrane segment at 89-109 (VANFILLLLVLIVLFFHQLVG) threads the bilayer. The Lumenal portion of the chain corresponds to 110 to 114 (DPLKR). The helical transmembrane segment at 115-131 (YAHALVFGILLTCRLLV) threads the bilayer. Residues 132-162 (SRQPEEEFPEKKLSRGNNGAHSREPIKMKVS) are Cytoplasmic-facing. Residues 141-162 (EKKLSRGNNGAHSREPIKMKVS) are disordered. A compositionally biased stretch (basic and acidic residues) spans 152-162 (HSREPIKMKVS).

Belongs to the DoxX family.

It is found in the peroxisome membrane. The protein localises to the cytoplasmic vesicle. Its subcellular location is the endoplasmic reticulum membrane. Functionally, molecular chaperone which mediates the proper assembly and functional expression of the nicotinic acetylcholine receptors (nAChRs) throughout the brain. Essential for the proper folding, assembly, function and surface trafficking of alpha-7 (CHRNA7), alpha-4-beta-2, alpha-3-beta-2 and alpha-3-beta-4 receptors. This chain is Novel acetylcholine receptor chaperone (tmem35a), found in Xenopus tropicalis (Western clawed frog).